A 185-amino-acid chain; its full sequence is Peptidyl-tRNA hydrolase (185 aa).

Position 14 (tyrosine 14) interacts with tRNA. Histidine 19 functions as the Proton acceptor in the catalytic mechanism. Residues tyrosine 64, asparagine 66, and asparagine 112 each contribute to the tRNA site.

The protein belongs to the PTH family. Monomer.

The protein localises to the cytoplasm. It catalyses the reaction an N-acyl-L-alpha-aminoacyl-tRNA + H2O = an N-acyl-L-amino acid + a tRNA + H(+). Its function is as follows. Hydrolyzes ribosome-free peptidyl-tRNAs (with 1 or more amino acids incorporated), which drop off the ribosome during protein synthesis, or as a result of ribosome stalling. Functionally, catalyzes the release of premature peptidyl moieties from peptidyl-tRNA molecules trapped in stalled 50S ribosomal subunits, and thus maintains levels of free tRNAs and 50S ribosomes. The chain is Peptidyl-tRNA hydrolase from Pediococcus pentosaceus (strain ATCC 25745 / CCUG 21536 / LMG 10740 / 183-1w).